The sequence spans 282 residues: Sulfur carrier protein FdhD (282 aa).

Cys115 serves as the catalytic Cysteine persulfide intermediate.

This sequence belongs to the FdhD family.

It is found in the cytoplasm. Functionally, required for formate dehydrogenase (FDH) activity. Acts as a sulfur carrier protein that transfers sulfur from IscS to the molybdenum cofactor prior to its insertion into FDH. The chain is Sulfur carrier protein FdhD from Streptomyces coelicolor (strain ATCC BAA-471 / A3(2) / M145).